A 472-amino-acid chain; its full sequence is Na(+)/H(+) antiporter NhaA 1 (472 aa).

11 consecutive transmembrane segments (helical) span residues 34 to 54 (TASI…NSQW), 86 to 106 (GLMV…CLVG), 116 to 136 (LVIA…AGVA), 146 to 166 (GWGI…ALLG), 175 to 195 (VTLS…IGLF), 203 to 223 (TSLM…VLGF), 227 to 247 (IFYL…GVHA), 324 to 344 (PVSL…ALPD), 353 to 373 (VVFI…ISVF), 394 to 414 (VFAL…IASL), and 428 to 448 (LGIL…FLMI).

It belongs to the NhaA Na(+)/H(+) (TC 2.A.33) antiporter family.

It is found in the cell inner membrane. The catalysed reaction is Na(+)(in) + 2 H(+)(out) = Na(+)(out) + 2 H(+)(in). Functionally, na(+)/H(+) antiporter that extrudes sodium in exchange for external protons. The chain is Na(+)/H(+) antiporter NhaA 1 from Pseudoalteromonas atlantica (strain T6c / ATCC BAA-1087).